The following is a 267-amino-acid chain: Zinc finger protein ZAT1 (267 aa).

The C2H2-type 1 zinc-finger motif lies at 5–27 (HKCKLCWKSFANGRALGGHMRSH). 2 disordered regions span residues 34-99 (PSQP…ADIK) and 181-204 (SHKK…KKKS). Residues 52–62 (QDRESETESSK) show a composition bias toward basic and acidic residues. Residues 63–73 (KPSRKRSRLNR) show a composition bias toward basic residues. Positions 83–97 (QSNEEGKSETARAAD) are enriched in basic and acidic residues. C2H2-type zinc fingers lie at residues 160–182 (FECE…RASH) and 209–231 (HECP…KRSH).

The protein localises to the nucleus. Functionally, probable transcription factor that may be involved in stress responses. This Arabidopsis thaliana (Mouse-ear cress) protein is Zinc finger protein ZAT1 (ZAT1).